A 483-amino-acid polypeptide reads, in one-letter code: L-2-hydroxyglutarate dehydrogenase, mitochondrial (483 aa).

Residues 1–67 (MKHKPETAAF…VDASKTIVRG (67 aa)) constitute a mitochondrion transit peptide.

The protein belongs to the L2HGDH family. Requires FAD as cofactor.

The protein resides in the mitochondrion. The enzyme catalyses (S)-2-hydroxyglutarate + A = 2-oxoglutarate + AH2. Its function is as follows. Catalyzes the oxidation of (S)-2-hydroxyglutarate to 2-oxoglutarate. Is specific for the (S) enantiomer and possesses very poor activity toward (R)-2-hydroxyglutarate. Has no activity toward related 2-hydroxy acids, such as glycolate, L-lactate or D-lactate. This chain is L-2-hydroxyglutarate dehydrogenase, mitochondrial, found in Arabidopsis thaliana (Mouse-ear cress).